The sequence spans 155 residues: Cytochrome P450 (155 aa).

Residue Cys-99 coordinates heme.

This sequence belongs to the cytochrome P450 family. Requires heme as cofactor.

The polypeptide is Cytochrome P450 (Helianthus annuus (Common sunflower)).